The following is a 126-amino-acid chain: Holo-[acyl-carrier-protein] synthase (126 aa).

Asp9 and Glu58 together coordinate Mg(2+).

Belongs to the P-Pant transferase superfamily. AcpS family. Mg(2+) serves as cofactor.

It is found in the cytoplasm. It carries out the reaction apo-[ACP] + CoA = holo-[ACP] + adenosine 3',5'-bisphosphate + H(+). Its function is as follows. Transfers the 4'-phosphopantetheine moiety from coenzyme A to a Ser of acyl-carrier-protein. This is Holo-[acyl-carrier-protein] synthase from Yersinia enterocolitica serotype O:8 / biotype 1B (strain NCTC 13174 / 8081).